The primary structure comprises 475 residues: Ribulose bisphosphate carboxylase large chain (475 aa).

A propeptide spanning residues 1 to 2 (MS) is cleaved from the precursor. At Pro-3 the chain carries N-acetylproline. Lys-14 is modified (N6,N6,N6-trimethyllysine). 2 residues coordinate substrate: Asn-123 and Thr-173. Lys-175 serves as the catalytic Proton acceptor. Position 177 (Lys-177) interacts with substrate. Positions 201, 203, and 204 each coordinate Mg(2+). N6-carboxylysine is present on Lys-201. His-294 (proton acceptor) is an active-site residue. 3 residues coordinate substrate: Arg-295, His-327, and Ser-379.

Belongs to the RuBisCO large chain family. Type I subfamily. In terms of assembly, heterohexadecamer of 8 large chains and 8 small chains; disulfide-linked. The disulfide link is formed within the large subunit homodimers. Mg(2+) is required as a cofactor. In terms of processing, the disulfide bond which can form in the large chain dimeric partners within the hexadecamer appears to be associated with oxidative stress and protein turnover.

The protein resides in the plastid. It localises to the chloroplast. It carries out the reaction 2 (2R)-3-phosphoglycerate + 2 H(+) = D-ribulose 1,5-bisphosphate + CO2 + H2O. It catalyses the reaction D-ribulose 1,5-bisphosphate + O2 = 2-phosphoglycolate + (2R)-3-phosphoglycerate + 2 H(+). Functionally, ruBisCO catalyzes two reactions: the carboxylation of D-ribulose 1,5-bisphosphate, the primary event in carbon dioxide fixation, as well as the oxidative fragmentation of the pentose substrate in the photorespiration process. Both reactions occur simultaneously and in competition at the same active site. This chain is Ribulose bisphosphate carboxylase large chain, found in Pseudolarix amabilis (Golden larch).